Reading from the N-terminus, the 314-residue chain is NADH-ubiquinone oxidoreductase chain 2 (314 aa).

A run of 9 helical transmembrane segments spans residues 13-35, 61-80, 85-107, 117-139, 144-166, 189-209, 224-244, 246-266, and 294-314; these read LGVM…VWLG, YFVV…VSLM, VSGL…LHSW, WLAS…SMIL, LWVV…NSVR, VVFV…FYGC, AASG…GFLA, VLVF…GSVI, and IWSL…VSFI.

It belongs to the complex I subunit 2 family.

It localises to the mitochondrion inner membrane. The catalysed reaction is a ubiquinone + NADH + 5 H(+)(in) = a ubiquinol + NAD(+) + 4 H(+)(out). In terms of biological role, core subunit of the mitochondrial membrane respiratory chain NADH dehydrogenase (Complex I) that is believed to belong to the minimal assembly required for catalysis. Complex I functions in the transfer of electrons from NADH to the respiratory chain. The immediate electron acceptor for the enzyme is believed to be ubiquinone. This is NADH-ubiquinone oxidoreductase chain 2 (ND2) from Mytilus edulis (Blue mussel).